A 107-amino-acid polypeptide reads, in one-letter code: Inner membrane protein YiaW (107 aa).

The Cytoplasmic portion of the chain corresponds to 1-6 (MFLDYF). Residues 7 to 29 (ALGVLIFVFLVIFYGIIILHDIP) form a helical membrane-spanning segment. Residues 30–43 (YLIAKKRNHPHADA) are Periplasmic-facing. A helical membrane pass occupies residues 44 to 66 (IHVAGWVSLFTLHVIWPFLWIWA). Over 67 to 107 (TLYRPERGWGMQSHDSSVMQLQQRIAGLEKQLADIKSSSAE) the chain is Cytoplasmic.

This sequence to E.coli YibI.

The protein resides in the cell inner membrane. This chain is Inner membrane protein YiaW (yiaW), found in Escherichia coli O157:H7.